A 1148-amino-acid polypeptide reads, in one-letter code: Protein pianissimo A (1148 aa).

The span at 1-34 shows a compositional bias: low complexity; the sequence is MTSSDSSVNTTSSSFGNISISSPNHSSSTPPLNN. The disordered stretch occupies residues 1 to 41; sequence MTSSDSSVNTTSSSFGNISISSPNHSSSTPPLNNGNGNNVS. An N-terminal Ras-GEF domain is found at 803 to 914; that stretch reads KVSALSLNVL…STSGVYLPPH (112 aa).

Belongs to the RICTOR family. In terms of assembly, part of a complex, TORC2, consisting of tor, lst8, piaA and ripA. Additional proteins, such as 14-3-3 and heat-shock proteins, may also belong to the TORC2 complex.

Its subcellular location is the cytoplasm. In terms of biological role, regulates cell growth, chemotaxis, signal relay and the actin cytoskeleton. Required for chemoattractant receptor and G protein-mediated activation of the 12 transmembrane domain adenylyl cyclase. Functions as a part of protein complex TORC2. TORC2, is presumed to be indirectly negatively modulated by rapamycin and regulates actin polarization. TORC2, but not TORC1, negatively regulates phagocytosis. This protein and dagA protein CRAC, a cytosolic regulator, are both essential for activation of the enzyme adenylyl cyclase. This protein and CRAC do not function redundantly. Both proteins are integral components of the adenylyl cyclase activation pathway. This chain is Protein pianissimo A (piaA), found in Dictyostelium discoideum (Social amoeba).